We begin with the raw amino-acid sequence, 360 residues long: Protein Wnt-2 (360 aa).

The first 25 residues, 1-25 (MNSPLRGIWLWLPLLLTWLTPEVSS), serve as a signal peptide directing secretion. Cystine bridges form between C76/C87, C127/C135, C137/C157, C206/C220, C208/C215, C278/C309, C294/C304, C308/C348, C324/C339, C326/C336, and C331/C332. S212 carries the O-palmitoleoyl serine; by PORCN lipid modification. N-linked (GlcNAc...) asparagine glycosylation is present at N295.

Belongs to the Wnt family. Palmitoleoylation is required for efficient binding to frizzled receptors. Depalmitoleoylation leads to Wnt signaling pathway inhibition.

The protein localises to the secreted. The protein resides in the extracellular space. Its subcellular location is the extracellular matrix. Its function is as follows. Ligand for members of the frizzled family of seven transmembrane receptors. Functions in the canonical Wnt signaling pathway that results in activation of transcription factors of the TCF/LEF family. Functions as a upstream regulator of FGF10 expression. Plays an important role in embryonic lung development. May contribute to embryonic brain development by regulating the proliferation of dopaminergic precursors and neurons. The chain is Protein Wnt-2 (WNT2) from Callithrix jacchus (White-tufted-ear marmoset).